The sequence spans 266 residues: Lipooligosaccharide biosynthesis protein lic2B (266 aa).

This sequence belongs to the glycosyltransferase 25 family.

Involved in extracellular lipooligosaccharide (LOS) biosynthesis and virulence expression. Involved in the synthesis of the oligosaccharide moiety of the LOS molecule by adding GalNAc. This is Lipooligosaccharide biosynthesis protein lic2B (lic2B) from Haemophilus influenzae.